Reading from the N-terminus, the 292-residue chain is Complex I assembly factor TIMMDC1, mitochondrial (292 aa).

A run of 2 helical transmembrane segments spans residues 146 to 168 (WSWR…TVYR) and 195 to 215 (GLLS…VLIL).

This sequence belongs to the Tim17/Tim22/Tim23 family. Associates with the intermediate 315 kDa subcomplex of incompletely assembled complex I.

The protein localises to the mitochondrion membrane. Its function is as follows. Chaperone protein involved in the assembly of the mitochondrial NADH:ubiquinone oxidoreductase complex (complex I). Participates in constructing the membrane arm of complex I. This is Complex I assembly factor TIMMDC1, mitochondrial (timmdc1) from Danio rerio (Zebrafish).